A 595-amino-acid chain; its full sequence is MRSQYCGDVNKSHVGQEVTLVGWVNRSRDLGGVVFLDLRDREGIVQVVYDPDLPEVFDVASTLRSEFCVQVTGLVRARPDSQVNKDMRTGEIEILGKGLTILNSAAPLPINMDKNQHNTEEQRLKYRYLDLRRPEMADRIVFRSKVTSAVRRFLDDSGFLDIETPILTKATPEGARDYLVPSRTYKGQFFALPQSPQLFKQLLMMSGFDRYYQIVKCFRDEDLRADRQPEFTQIDIETSFMSSAEVMAKTEEMTRGLFKDLLNVDLGEFPKMTFAEAMRRFGSDKPDLRNPLELIDVADILKDVEFKVFQEPANDPAGRVAVLCIPGGAKLSRKQLDEYAKYATIYGAKGLAWMKVNDLDKGLEGIQSPVLKFLNEDVVNGLLERTNAKTGDLILFGADKANIVAEAMGALRLKAGEDFDLLNGEWKPLWVVDFPMFEPTSDGGLHAMHHPFTAPMGITPEQLEADPTAAISDAYDMVLNGCELGGGSVRIHNSEMQSAVFRILGIEEEEANEKFGFLLEALRYGTPPHAGLAFGLDRIVMLMTGATSIRDVMAFPKTTTAACPLTNAPGFANPAQLVELGVNVIESEDNKEEQE.

Glu-173 lines the L-aspartate pocket. The interval 197 to 200 is aspartate; sequence QLFK. Position 219 (Arg-219) interacts with L-aspartate. ATP-binding positions include 219–221 and Gln-228; that span reads RDE. His-449 lines the L-aspartate pocket. ATP is bound at residue Glu-483. Arg-490 serves as a coordination point for L-aspartate. 535–538 contributes to the ATP binding site; it reads GLDR.

This sequence belongs to the class-II aminoacyl-tRNA synthetase family. Type 1 subfamily. In terms of assembly, homodimer.

The protein resides in the cytoplasm. The catalysed reaction is tRNA(Asp) + L-aspartate + ATP = L-aspartyl-tRNA(Asp) + AMP + diphosphate. Catalyzes the attachment of L-aspartate to tRNA(Asp) in a two-step reaction: L-aspartate is first activated by ATP to form Asp-AMP and then transferred to the acceptor end of tRNA(Asp). The sequence is that of Aspartate--tRNA ligase from Shewanella sediminis (strain HAW-EB3).